Consider the following 493-residue polypeptide: Arginine decarboxylase (493 aa).

The residue at position 229 (Lys229) is an N6-(pyridoxal phosphate)lysine.

This sequence belongs to the Orn/Lys/Arg decarboxylase class-I family. Pyridoxal 5'-phosphate is required as a cofactor.

It localises to the cytoplasm. It catalyses the reaction L-arginine + H(+) = agmatine + CO2. Its pathway is amine and polyamine biosynthesis; agmatine biosynthesis; agmatine from L-arginine: step 1/1. Its function is as follows. Catalyzes the formation of agmatine from arginine. In Bacillus anthracis, this protein is Arginine decarboxylase (speA).